A 308-amino-acid polypeptide reads, in one-letter code: Maspardin (308 aa).

The region spanning 87–159 (FCDGFRKLLD…NSFWLMPAFM (73 aa)) is the AB hydrolase-1 domain. A Phosphoserine modification is found at Ser304.

It belongs to the AB hydrolase superfamily. In terms of assembly, interacts with CD4. Interacts with ALDH16A1.

The protein resides in the cytoplasm. In terms of biological role, may play a role as a negative regulatory factor in CD4-dependent T-cell activation. The polypeptide is Maspardin (SPG21) (Pongo abelii (Sumatran orangutan)).